The primary structure comprises 212 residues: Protein GrpE (212 aa).

The interval 1 to 69 (MAEMSNNKTS…LESAKKEIES (69 aa)) is disordered. The span at 40–60 (ETTQTESMETAETETSLQTEL) shows a compositional bias: low complexity.

This sequence belongs to the GrpE family. Homodimer.

It localises to the cytoplasm. Participates actively in the response to hyperosmotic and heat shock by preventing the aggregation of stress-denatured proteins, in association with DnaK and GrpE. It is the nucleotide exchange factor for DnaK and may function as a thermosensor. Unfolded proteins bind initially to DnaJ; upon interaction with the DnaJ-bound protein, DnaK hydrolyzes its bound ATP, resulting in the formation of a stable complex. GrpE releases ADP from DnaK; ATP binding to DnaK triggers the release of the substrate protein, thus completing the reaction cycle. Several rounds of ATP-dependent interactions between DnaJ, DnaK and GrpE are required for fully efficient folding. This is Protein GrpE from Leptospira interrogans serogroup Icterohaemorrhagiae serovar Lai (strain 56601).